The sequence spans 629 residues: Phosphoglucomutase, chloroplastic (629 aa).

A chloroplast-targeting transit peptide spans 1-69 (MSSTYARFDT…SSSSGPIIAG (69 aa)). Alpha-D-glucose 1,6-bisphosphate-binding residues include R94 and S187. S187 serves as the catalytic Phosphoserine intermediate. 4 residues coordinate Mg(2+): S187, D352, D354, and D356. S187 carries the phosphoserine modification. Positions 356, 357, 420, 439, 441, and 452 each coordinate alpha-D-glucose 1,6-bisphosphate.

It belongs to the phosphohexose mutase family. Monomer. Mg(2+) is required as a cofactor.

The protein localises to the plastid. The protein resides in the chloroplast. It carries out the reaction alpha-D-glucose 1-phosphate = alpha-D-glucose 6-phosphate. It catalyses the reaction O-phospho-L-seryl-[protein] + alpha-D-glucose 1-phosphate = alpha-D-glucose 1,6-bisphosphate + L-seryl-[protein]. The enzyme catalyses alpha-D-glucose 1,6-bisphosphate + L-seryl-[protein] = O-phospho-L-seryl-[protein] + alpha-D-glucose 6-phosphate. Inhibited by the Calvin cycle intermediates fructose-1,6-bisphosphate and ribulose-1,5-bisphosphate. Functionally, catalyzes the reversible isomerization of alpha-D-glucose 1-phosphate to alpha-D-glucose 6-phosphate. The mechanism proceeds via the intermediate compound alpha-D-glucose 1,6-bisphosphate. This enzyme participates in both the breakdown and synthesis of glucose. This is Phosphoglucomutase, chloroplastic (PGMP) from Brassica napus (Rape).